We begin with the raw amino-acid sequence, 254 residues long: MSSPIPQALWSAQIPLHITHPASPTTPFITSIPRFSYLALLIPRLSTFFNSPCSSFHFEDVQLRNLAVGLLVDLYQPALPWKLTVNDGVGWDIADTFLNCVKEADFVRNGNANQIMKMSKENTTQLWNAVIDNDHPSFNRINSHLLNAPTALKHVPIRIYVPTSGPDSSATHPEHATFKVIQSLMAATSSDRRPKLLGQALKEVLPGLFPSSRDPILAKVVMHGAGVPFDAPLEDLMREAAYPDGWLCLVVIVL.

A Glycyl lysine isopeptide (Lys-Gly) (interchain with G-Cter in ATG12) cross-link involves residue Lys-102.

This sequence belongs to the ATG5 family. Conjugated with ATG12. The ATG5-ATG12 conjugate forms a complex with several units of ATG16. The ATG12-ATG5 conjugate also associates with ATG3. In terms of processing, conjugated to ATG12; which is essential for autophagy. Conjugation with ATG12 involves ATG7 as an E1-like activating enzyme and ATG10 as an E2-like conjugating enzyme.

It localises to the preautophagosomal structure membrane. Functionally, involved in cytoplasm to vacuole transport (Cvt) and autophagic vesicle formation. Autophagy is essential for maintenance of amino acid levels and protein synthesis under nitrogen starvation. Required for selective autophagic degradation of the nucleus (nucleophagy). Also required for mitophagy, which eliminates defective or superfluous mitochondria in order to fulfill cellular energy requirements and prevent excess ROS production. Conjugation with ATG12, through a ubiquitin-like conjugating system involving ATG7 as an E1-like activating enzyme and ATG10 as an E2-like conjugating enzyme, is essential for its function. The ATG12-ATG5 conjugate acts as an E3-like enzyme which is required for lipidation of ATG8 and ATG8 association to the vesicle membranes. ATG12-ATG5 rearranges the ATG3 catalytic center and enhances its E2 activity. Autophagy is required for proper vegetative growth, asexual/sexual reproduction, and full virulence. Autophagy is particularly involved in the biosynthesis of deoxynivalenol (DON), an important virulence determinant. This Gibberella zeae (strain ATCC MYA-4620 / CBS 123657 / FGSC 9075 / NRRL 31084 / PH-1) (Wheat head blight fungus) protein is Autophagy-related protein 5.